We begin with the raw amino-acid sequence, 204 residues long: Crossover junction endodeoxyribonuclease RuvC (204 aa).

Active-site residues include Asp-7, Glu-68, and Asp-141. 3 residues coordinate Mg(2+): Asp-7, Glu-68, and Asp-141. The segment at 164-204 is disordered; that stretch reads QAVAAHRTSGASRTPGAAGTPGPSRTPGAPGTSRTLKGRTA.

It belongs to the RuvC family. As to quaternary structure, homodimer which binds Holliday junction (HJ) DNA. The HJ becomes 2-fold symmetrical on binding to RuvC with unstacked arms; it has a different conformation from HJ DNA in complex with RuvA. In the full resolvosome a probable DNA-RuvA(4)-RuvB(12)-RuvC(2) complex forms which resolves the HJ. Requires Mg(2+) as cofactor.

The protein resides in the cytoplasm. The catalysed reaction is Endonucleolytic cleavage at a junction such as a reciprocal single-stranded crossover between two homologous DNA duplexes (Holliday junction).. Its function is as follows. The RuvA-RuvB-RuvC complex processes Holliday junction (HJ) DNA during genetic recombination and DNA repair. Endonuclease that resolves HJ intermediates. Cleaves cruciform DNA by making single-stranded nicks across the HJ at symmetrical positions within the homologous arms, yielding a 5'-phosphate and a 3'-hydroxyl group; requires a central core of homology in the junction. The consensus cleavage sequence is 5'-(A/T)TT(C/G)-3'. Cleavage occurs on the 3'-side of the TT dinucleotide at the point of strand exchange. HJ branch migration catalyzed by RuvA-RuvB allows RuvC to scan DNA until it finds its consensus sequence, where it cleaves and resolves the cruciform DNA. This is Crossover junction endodeoxyribonuclease RuvC from Streptomyces griseus subsp. griseus (strain JCM 4626 / CBS 651.72 / NBRC 13350 / KCC S-0626 / ISP 5235).